Here is a 350-residue protein sequence, read N- to C-terminus: UDP-N-acetylenolpyruvoylglucosamine reductase (350 aa).

The FAD-binding PCMH-type domain maps to 24-195 (HVEATARWLL…VAVEFNLPLL (172 aa)). The active site involves R172. The Proton donor role is filled by S245. E342 is an active-site residue.

It belongs to the MurB family. The cofactor is FAD.

The protein resides in the cytoplasm. The enzyme catalyses UDP-N-acetyl-alpha-D-muramate + NADP(+) = UDP-N-acetyl-3-O-(1-carboxyvinyl)-alpha-D-glucosamine + NADPH + H(+). It functions in the pathway cell wall biogenesis; peptidoglycan biosynthesis. Cell wall formation. This Xanthomonas euvesicatoria pv. vesicatoria (strain 85-10) (Xanthomonas campestris pv. vesicatoria) protein is UDP-N-acetylenolpyruvoylglucosamine reductase.